A 275-amino-acid polypeptide reads, in one-letter code: MELSDISFPVTSADDFYDDPCFNTSDMHFFEDLDPRLVHVGLLKPDDHHYNEDEHIRAPSGHHQAGRCLLWACKACKRKTTNSDRRKAATMRERRRLGKVNDAFENLKRCTSNNPNQRLPKVEILRNAISYIESLQSLLRGQDGENYYPVLEHYSGDSDASSPQSNCSDGMMDYNAPTCTSARRSNYDSSYFAETPNADSRSNKNAAVSSLDCLSNIVERISTDTSACTVLSGQEGSEGSPCSPQEGSILSRNGGTVPSPTNCPQPSHDPIYQVL.

The bHLH domain maps to 84-135 (DRRKAATMRERRRLGKVNDAFENLKRCTSNNPNQRLPKVEILRNAISYIESL). Over residues 232 to 265 (SGQEGSEGSPCSPQEGSILSRNGGTVPSPTNCPQ) the composition is skewed to polar residues. The segment at 232–275 (SGQEGSEGSPCSPQEGSILSRNGGTVPSPTNCPQPSHDPIYQVL) is disordered.

In terms of assembly, efficient DNA binding requires dimerization with another bHLH protein.

It localises to the nucleus. May act as a transcriptional activator that promotes transcription of muscle-specific target genes and plays a role in muscle differentiation. In Oncorhynchus mykiss (Rainbow trout), this protein is Myoblast determination protein 1 homolog 2 (myod2).